The chain runs to 317 residues: Protein IRX15-LIKE (317 aa).

The chain crosses the membrane as a helical span at residues 27–47 (LWLLAFVSFFTIAFLLTLLYT).

In terms of tissue distribution, expressed in roots, rosette leaves, stems and siliques. Expressed in the xylem.

The protein resides in the golgi apparatus membrane. Functionally, required for xylan biosynthesis, but not directly involved in catalyzing the addition of sugars to the growing polymer. The sequence is that of Protein IRX15-LIKE (IRX15-L) from Arabidopsis thaliana (Mouse-ear cress).